Consider the following 243-residue polypeptide: Ribonuclease PH (243 aa).

Residues arginine 91 and 129 to 131 contribute to the phosphate site; that span reads GTR.

The protein belongs to the RNase PH family. As to quaternary structure, homohexameric ring arranged as a trimer of dimers.

The catalysed reaction is tRNA(n+1) + phosphate = tRNA(n) + a ribonucleoside 5'-diphosphate. Phosphorolytic 3'-5' exoribonuclease that plays an important role in tRNA 3'-end maturation. Removes nucleotide residues following the 3'-CCA terminus of tRNAs; can also add nucleotides to the ends of RNA molecules by using nucleoside diphosphates as substrates, but this may not be physiologically important. Probably plays a role in initiation of 16S rRNA degradation (leading to ribosome degradation) during starvation. This chain is Ribonuclease PH, found in Burkholderia lata (strain ATCC 17760 / DSM 23089 / LMG 22485 / NCIMB 9086 / R18194 / 383).